We begin with the raw amino-acid sequence, 341 residues long: Guanine nucleotide-binding protein subunit beta (341 aa).

WD repeat units lie at residues 54–84 (GHLA…IVWD), 96–126 (LRSS…SIYS), 142–171 (GHTG…ALWN), 183–213 (GHTG…KLFD), 225–255 (GHES…RLFD), 269–299 (NIIC…NVWD), and 311–341 (GHDN…KIWN).

It belongs to the WD repeat G protein beta family. In terms of assembly, g proteins are composed of 3 units, alpha, beta and gamma.

Guanine nucleotide-binding proteins (G proteins) are involved as a modulator or transducer in various transmembrane signaling systems. The beta and gamma chains are required for the GTPase activity, for replacement of GDP by GTP, and for G protein-effector interaction. In Loligo forbesii (Veined squid), this protein is Guanine nucleotide-binding protein subunit beta.